Reading from the N-terminus, the 275-residue chain is Nitrogenase iron protein 1 (275 aa).

9-16 (GKGGIGKS) is an ATP binding site. C98 is a binding site for [4Fe-4S] cluster. Residue R101 is modified to ADP-ribosylarginine; by dinitrogenase reductase ADP-ribosyltransferase. C132 contacts [4Fe-4S] cluster.

The protein belongs to the NifH/BchL/ChlL family. In terms of assembly, homodimer. [4Fe-4S] cluster serves as cofactor. The reversible ADP-ribosylation of Arg-101 inactivates the nitrogenase reductase and regulates nitrogenase activity.

It catalyses the reaction N2 + 8 reduced [2Fe-2S]-[ferredoxin] + 16 ATP + 16 H2O = H2 + 8 oxidized [2Fe-2S]-[ferredoxin] + 2 NH4(+) + 16 ADP + 16 phosphate + 6 H(+). Its function is as follows. The key enzymatic reactions in nitrogen fixation are catalyzed by the nitrogenase complex, which has 2 components: the iron protein and the molybdenum-iron protein. The sequence is that of Nitrogenase iron protein 1 (nifH1) from Methanobacterium ivanovii.